A 595-amino-acid chain; its full sequence is MRAARAAPLLQLLLLLGPWLEAAGVAESPLPAVVLAILARNAEHSLPHYLGALERLDYPRARMALWCATDHNVDNTTEMLQEWLAAVGDDYAAVVWRPEGEPRFYPDEEGPKHWTKERHQFLMELKQEALTFARNWGADYILFADTDNILTNNQTLRLLMGQGLPVVAPMLDSQTYYSNFWCGITPQGYYRRTAEYFPTKNRQRRGCFRVPMVHSTFLASLRAEGADQLAFYPPHPNYTWPFDDIIVFAYACQAAGVSVHVCNEHRYGYMNVPVKSHQGLEDERVNFIHLILEALVDGPRMQASAHVTRPSKRPSKIGFDEVFVISLARRPDRRERMLASLWEMEISGRVVDAVDGWMLNSSAIRNLGVDLLPGYQDPYSGRTLTKGEVGCFLSHYSIWEEVVARGLARVLVFEDDVRFESNFRGRLERLMEDVEAEKLSWDLIYLGRKQVNPEKETAVEGLPGLVVAGYSYWTLAYALRLAGARKLLASQPLRRMLPVDEFLPIMFDQHPNEQYKAHFWPRDLVAFSAQPLLAAPTHYAGDAEWLSDTETSSPWDDDSGRLISWSGSQKTLRSPRLDLTGSSGHSLQPQPRDEL.

The N-terminal stretch at 1-22 is a signal peptide; sequence MRAARAAPLLQLLLLLGPWLEA. Residues Asn-75, Asn-153, Asn-237, and Asn-360 are each glycosylated (N-linked (GlcNAc...) asparagine). A disordered region spans residues 548–595; sequence DTETSSPWDDDSGRLISWSGSQKTLRSPRLDLTGSSGHSLQPQPRDEL. Over residues 580-589 the composition is skewed to polar residues; it reads TGSSGHSLQP. The short motif at 592 to 595 is the Prevents secretion from ER element; that stretch reads RDEL.

It belongs to the glycosyltransferase 25 family. Ubiquitous. Highly expressed in secretory and nervous tissues.

The protein resides in the endoplasmic reticulum lumen. Probable cell adhesion protein involved in leukocyte transmigration across the blood-brain barrier. Does not express any beta-galactosyltransferase activity in vitro. The polypeptide is Inactive glycosyltransferase 25 family member 3 (CERCAM) (Homo sapiens (Human)).